A 231-amino-acid chain; its full sequence is Ribose-5-phosphate isomerase A (231 aa).

Substrate contacts are provided by residues 32-35 (TGST), 85-88 (DGAD), and 98-101 (KGGG). E107 acts as the Proton acceptor in catalysis. K125 is a substrate binding site.

It belongs to the ribose 5-phosphate isomerase family. As to quaternary structure, homodimer.

The catalysed reaction is aldehydo-D-ribose 5-phosphate = D-ribulose 5-phosphate. The protein operates within carbohydrate degradation; pentose phosphate pathway; D-ribose 5-phosphate from D-ribulose 5-phosphate (non-oxidative stage): step 1/1. In terms of biological role, catalyzes the reversible conversion of ribose-5-phosphate to ribulose 5-phosphate. The protein is Ribose-5-phosphate isomerase A of Paraburkholderia phytofirmans (strain DSM 17436 / LMG 22146 / PsJN) (Burkholderia phytofirmans).